A 1349-amino-acid polypeptide reads, in one-letter code: Nitric oxide synthase (1349 aa).

The interval 23–195 (AQQQQQQQQQ…QPRKMSQDYR (173 aa)) is disordered. Low complexity-rich tracts occupy residues 24–51 (QQQQ…TQQQ) and 64–73 (LNGNGLLSGN). A compositionally biased stretch (gly residues) spans 142–159 (SGSGSGSGGGGVGVGQGA). Polar residues predominate over residues 165–189 (GSCTASGKSSRELSPSPKNQQQPRK). Ser250 lines the (6R)-L-erythro-5,6,7,8-tetrahydrobiopterin pocket. Heme b is bound at residue Cys328. Residues Gln391, Trp500, Tyr501, Glu505, and Asn510 each coordinate L-arginine. (6R)-L-erythro-5,6,7,8-tetrahydrobiopterin contacts are provided by Trp591 and Phe604. Residue Tyr619 coordinates heme b. Residues 641–661 (PRRKFNFKQIARAVKFTSKLF) form a calmodulin-binding region. Positions 671–868 (ATVLYATETG…SFRKWAPEVF (198 aa)) constitute a Flavodoxin-like domain. 814–845 (VFALGSSAYPNFCAFGQYVDNILGELGGERLL) provides a ligand contact to FMN. Positions 928–1167 (AKAKPHNLTR…VRSALGFHLP (240 aa)) constitute an FAD-binding FR-type domain. FAD contacts are provided by residues 957 to 968 (YEPGDHVGIFPA) and 1100 to 1110 (LQPRFYSISSS). Residues 1175 to 1193 (ILIG…WQEF) and 1273 to 1287 (GHIY…AEHV) contribute to the NADP(+) site.

The protein belongs to the NOS family. Heme b is required as a cofactor. Requires FAD as cofactor. FMN serves as cofactor.

The catalysed reaction is 2 L-arginine + 3 NADPH + 4 O2 + H(+) = 2 L-citrulline + 2 nitric oxide + 3 NADP(+) + 4 H2O. Its activity is regulated as follows. Stimulated by calcium/calmodulin. Catalyzes the conversion of L-arginine to L-citrulline producing nitric oxide (NO) which is a messenger molecule with diverse functions throughout the body. Truncated isoforms (isoform 3-isoform 6) are able to form intracellular complexes with the full-length protein and serve as dominant negative inhibitors of the enzyme activity. In Drosophila melanogaster (Fruit fly), this protein is Nitric oxide synthase (Nos).